The chain runs to 220 residues: Iron-sulfur cluster repair protein YtfE (220 aa).

The protein belongs to the RIC family. YtfE subfamily. As to quaternary structure, homodimer.

The protein localises to the cytoplasm. Its function is as follows. Di-iron-containing protein involved in the repair of iron-sulfur clusters damaged by oxidative and nitrosative stress conditions. This Escherichia coli O81 (strain ED1a) protein is Iron-sulfur cluster repair protein YtfE.